A 79-amino-acid polypeptide reads, in one-letter code: Suppressor of tumorigenicity 20 protein (79 aa).

As to expression, expressed in leukocytes, lung, spleen, liver, heart, kidney, muscle and uterine cervix. Down-regulated in cervical cancer.

May act as a tumor suppressor. Promotes apoptosis of cancer cells. The polypeptide is Suppressor of tumorigenicity 20 protein (ST20) (Homo sapiens (Human)).